The following is a 93-amino-acid chain: U12-lycotoxin-Ls1e (93 aa).

The N-terminal stretch at 1–18 is a signal peptide; it reads MKFAVILLFTLVVLAVAS. A propeptide spanning residues 19–38 is cleaved from the precursor; it reads ESVEEDTREIDVEEFQEQQR.

Belongs to the neurotoxin 31 family. Contains 5 disulfide bonds. In terms of tissue distribution, expressed by the venom gland.

The protein localises to the secreted. The protein is U12-lycotoxin-Ls1e of Lycosa singoriensis (Wolf spider).